The following is a 153-amino-acid chain: Pheromone-binding protein Gp-9 (153 aa).

The N-terminal stretch at 1–19 (MKTFVLHIFIFALVAFASA) is a signal peptide. Intrachain disulfides connect Cys37–Cys77, Cys73–Cys129, and Cys118–Cys138.

Belongs to the PBP/GOBP family. In terms of assembly, homodimer.

The protein localises to the secreted. Functionally, colony queen number, a major feature of social organization, is associated with worker genotype for Gp-9. Colonies are headed by either a single reproductive queen (monogyne form) or multiple queens (polygyne form). Differences in worker Gp-9 genotypes between social forms may cause differences in workers' abilities to recognize queens and regulate their numbers. This chain is Pheromone-binding protein Gp-9, found in Solenopsis interrupta (Fire ant).